The sequence spans 198 residues: Large ribosomal subunit protein uL13B (198 aa).

S2 is modified (N-acetylserine; partial). Residue S43 is modified to Phosphoserine. A Glycyl lysine isopeptide (Lys-Gly) (interchain with G-Cter in ubiquitin) cross-link involves residue K176. Phosphoserine occurs at positions 181, 185, and 187.

The protein belongs to the universal ribosomal protein uL13 family. Component of the large ribosomal subunit (LSU). Mature yeast ribosomes consist of a small (40S) and a large (60S) subunit. The 40S small subunit contains 1 molecule of ribosomal RNA (18S rRNA) and 33 different proteins (encoded by 57 genes). The large 60S subunit contains 3 rRNA molecules (25S, 5.8S and 5S rRNA) and 46 different proteins (encoded by 81 genes). Post-translationally, N-terminally acetylated by acetyltransferase NatA.

The protein resides in the cytoplasm. Functionally, component of the ribosome, a large ribonucleoprotein complex responsible for the synthesis of proteins in the cell. The small ribosomal subunit (SSU) binds messenger RNAs (mRNAs) and translates the encoded message by selecting cognate aminoacyl-transfer RNA (tRNA) molecules. The large subunit (LSU) contains the ribosomal catalytic site termed the peptidyl transferase center (PTC), which catalyzes the formation of peptide bonds, thereby polymerizing the amino acids delivered by tRNAs into a polypeptide chain. The nascent polypeptides leave the ribosome through a tunnel in the LSU and interact with protein factors that function in enzymatic processing, targeting, and the membrane insertion of nascent chains at the exit of the ribosomal tunnel. This chain is Large ribosomal subunit protein uL13B, found in Saccharomyces cerevisiae (strain ATCC 204508 / S288c) (Baker's yeast).